Reading from the N-terminus, the 122-residue chain is Large ribosomal subunit protein uL14 (122 aa).

Belongs to the universal ribosomal protein uL14 family. In terms of assembly, part of the 50S ribosomal subunit. Forms a cluster with proteins L3 and L19. In the 70S ribosome, L14 and L19 interact and together make contacts with the 16S rRNA in bridges B5 and B8.

Functionally, binds to 23S rRNA. Forms part of two intersubunit bridges in the 70S ribosome. The sequence is that of Large ribosomal subunit protein uL14 from Clostridium perfringens (strain ATCC 13124 / DSM 756 / JCM 1290 / NCIMB 6125 / NCTC 8237 / Type A).